The chain runs to 476 residues: Ribulose bisphosphate carboxylase large chain (476 aa).

Substrate-binding residues include asparagine 124 and threonine 174. The Proton acceptor role is filled by lysine 176. Lysine 178 provides a ligand contact to substrate. Mg(2+) contacts are provided by lysine 202, aspartate 204, and glutamate 205. N6-carboxylysine is present on lysine 202. Catalysis depends on histidine 295, which acts as the Proton acceptor. Substrate-binding residues include arginine 296, histidine 328, and serine 380.

Belongs to the RuBisCO large chain family. Type I subfamily. As to quaternary structure, heterohexadecamer of 8 large chains and 8 small chains; disulfide-linked. The disulfide link is formed within the large subunit homodimers. The cofactor is Mg(2+). In terms of processing, the disulfide bond which can form in the large chain dimeric partners within the hexadecamer appears to be associated with oxidative stress and protein turnover.

Its subcellular location is the carboxysome. It catalyses the reaction 2 (2R)-3-phosphoglycerate + 2 H(+) = D-ribulose 1,5-bisphosphate + CO2 + H2O. It carries out the reaction D-ribulose 1,5-bisphosphate + O2 = 2-phosphoglycolate + (2R)-3-phosphoglycerate + 2 H(+). RuBisCO catalyzes two reactions: the carboxylation of D-ribulose 1,5-bisphosphate, the primary event in carbon dioxide fixation, as well as the oxidative fragmentation of the pentose substrate in the photorespiration process. Both reactions occur simultaneously and in competition at the same active site. The chain is Ribulose bisphosphate carboxylase large chain from Trichodesmium erythraeum (strain IMS101).